Here is a 363-residue protein sequence, read N- to C-terminus: Inositol-3-phosphate synthase (363 aa).

Lys65 participates in a covalent cross-link: Isoglutamyl lysine isopeptide (Lys-Gln) (interchain with Q-Cter in protein Pup). The NAD(+) site is built by Asp70, Ala129, Tyr149, Ser192, Asp227, and Lys240.

Belongs to the myo-inositol 1-phosphate synthase family. Requires NAD(+) as cofactor. In terms of processing, pupylated at Lys-65 by the prokaryotic ubiquitin-like protein Pup, which leads to its degradation by the proteasome.

It carries out the reaction D-glucose 6-phosphate = 1D-myo-inositol 3-phosphate. In terms of biological role, key enzyme in myo-inositol biosynthesis pathway that catalyzes the conversion of glucose 6-phosphate to 1D-myo-inositol 3-phosphate in a NAD-dependent manner. This Mycolicibacterium smegmatis (strain ATCC 700084 / mc(2)155) (Mycobacterium smegmatis) protein is Inositol-3-phosphate synthase (ino1).